A 426-amino-acid polypeptide reads, in one-letter code: MSRSEELFLQAQKHIPGGVNSPVRAFKAVGGTPVFFEKALGAYIWDADGKRYIDYVQSWGPMVLGHAHPEVINTVIDAAKHGLSFGAPTERETTLAEKLCSLMPGMDMVRFVSSGTEATMSAIRLARAFTKRDKIIKFEGCYHGHSDSLLIKAGSGALTLGVPSSPGVPAVLADHTITLDYNNAEQVRECFAELGEQIACIIVEPVVGNMNCVPPVPGFLECLREVCDRYGSVLILDEVMTGFRVSPTGAQGYYGIKADITTLGKVIGGGMPVGAFGGRRDIMQMIAPSGPVYQAGTLSGNPVAMAAGLKTLELLQAPEIYPHLYARTNQLVEGLQTLADKAGIPFTTNHVGSMFGFFFTEEKKVTNFKQVMACDIPRFNKFFHGMLERGIYLAPASYEAGFMSTAHTQGDIDQTLGAAEAVFSSL.

Lysine 265 carries the post-translational modification N6-(pyridoxal phosphate)lysine.

It belongs to the class-III pyridoxal-phosphate-dependent aminotransferase family. HemL subfamily. In terms of assembly, homodimer. Requires pyridoxal 5'-phosphate as cofactor.

The protein resides in the cytoplasm. It carries out the reaction (S)-4-amino-5-oxopentanoate = 5-aminolevulinate. It functions in the pathway porphyrin-containing compound metabolism; protoporphyrin-IX biosynthesis; 5-aminolevulinate from L-glutamyl-tRNA(Glu): step 2/2. The polypeptide is Glutamate-1-semialdehyde 2,1-aminomutase (Cellvibrio japonicus (strain Ueda107) (Pseudomonas fluorescens subsp. cellulosa)).